The sequence spans 745 residues: Eukaryotic translation initiation factor 3 subunit B (745 aa).

Positions 41-129 (DVIVIEGVPV…HRFSVHRFTD (89 aa)) constitute an RRM domain. WD repeat units follow at residues 189 to 230 (EHSR…RFMR), 251 to 293 (WSHE…RSFP), 303 to 344 (GQLK…LLEK), and 580 to 625 (GEHY…LQKH). Residues 644-745 (GKDEQKRVRK…IIEETEEVLA (102 aa)) are a coiled coil.

Belongs to the eIF-3 subunit B family. Component of the eukaryotic translation initiation factor 3 (eIF-3) complex.

It is found in the cytoplasm. Its function is as follows. RNA-binding component of the eukaryotic translation initiation factor 3 (eIF-3) complex, which is involved in protein synthesis of a specialized repertoire of mRNAs and, together with other initiation factors, stimulates binding of mRNA and methionyl-tRNAi to the 40S ribosome. The eIF-3 complex specifically targets and initiates translation of a subset of mRNAs involved in cell proliferation. This chain is Eukaryotic translation initiation factor 3 subunit B, found in Mycosarcoma maydis (Corn smut fungus).